The primary structure comprises 185 residues: Ribosome-recycling factor (185 aa).

It belongs to the RRF family.

The protein resides in the cytoplasm. Functionally, responsible for the release of ribosomes from messenger RNA at the termination of protein biosynthesis. May increase the efficiency of translation by recycling ribosomes from one round of translation to another. The polypeptide is Ribosome-recycling factor (Marinomonas sp. (strain MWYL1)).